Here is a 121-residue protein sequence, read N- to C-terminus: Large ribosomal subunit protein uL14 (121 aa).

It belongs to the universal ribosomal protein uL14 family. Part of the 50S ribosomal subunit. Forms a cluster with proteins L3 and L19. In the 70S ribosome, L14 and L19 interact and together make contacts with the 16S rRNA in bridges B5 and B8.

In terms of biological role, binds to 23S rRNA. Forms part of two intersubunit bridges in the 70S ribosome. The polypeptide is Large ribosomal subunit protein uL14 (Prochlorococcus marinus (strain MIT 9313)).